The sequence spans 418 residues: Putative ion-transport protein YfeO (418 aa).

A run of 12 helical transmembrane segments spans residues 10-30, 54-74, 99-119, 120-140, 149-169, 186-206, 223-243, 258-278, 300-320, 322-342, 343-363, and 371-391; these read LLLSLPAVAIGIASSLILIVV, DSPLWIIGVLTLTGIAVGLVI, ALPGLIVALILGLAGGVSLGP, EHPIMTVNIALAVAIGARLLP, ILASAGTIGALFGTPVAAALI, LFAPLMAAAAGALTTGLFFHP, ILSGAIVAAIAIAAGMVAVWC, VLVLGIGGFILGILGVIGGPV, DYFLLAVIKLAALVVAAASGF, GGRIFPAVFVGVALGLMLHEH, VPAVPAAITVSCAILGIVLVV, and LFMAAVVVPNTTLLPLLCIVM.

It belongs to the chloride channel (TC 2.A.49) family.

Its subcellular location is the cell membrane. This is Putative ion-transport protein YfeO from Escherichia coli O8 (strain IAI1).